The primary structure comprises 501 residues: ATP synthase subunit alpha (501 aa).

An ATP-binding site is contributed by 169 to 176 (GDRQTGKT).

This sequence belongs to the ATPase alpha/beta chains family. In terms of assembly, F-type ATPases have 2 components, CF(1) - the catalytic core - and CF(0) - the membrane proton channel. CF(1) has five subunits: alpha(3), beta(3), gamma(1), delta(1), epsilon(1). CF(0) has three main subunits: a(1), b(2) and c(9-12). The alpha and beta chains form an alternating ring which encloses part of the gamma chain. CF(1) is attached to CF(0) by a central stalk formed by the gamma and epsilon chains, while a peripheral stalk is formed by the delta and b chains.

The protein localises to the cell inner membrane. The catalysed reaction is ATP + H2O + 4 H(+)(in) = ADP + phosphate + 5 H(+)(out). Produces ATP from ADP in the presence of a proton gradient across the membrane. The alpha chain is a regulatory subunit. This Campylobacter lari (strain RM2100 / D67 / ATCC BAA-1060) protein is ATP synthase subunit alpha.